We begin with the raw amino-acid sequence, 151 residues long: Pyruvoyl-dependent arginine decarboxylase (151 aa).

Ser-42 bears the Pyruvic acid (Ser) mark.

Belongs to the PdaD family. The cofactor is pyruvate.

The catalysed reaction is L-arginine + H(+) = agmatine + CO2. This Methanothermobacter thermautotrophicus (strain ATCC 29096 / DSM 1053 / JCM 10044 / NBRC 100330 / Delta H) (Methanobacterium thermoautotrophicum) protein is Pyruvoyl-dependent arginine decarboxylase.